Here is a 209-residue protein sequence, read N- to C-terminus: Ribosomal RNA small subunit methyltransferase G (209 aa).

S-adenosyl-L-methionine contacts are provided by residues G75, L80, 126 to 127 (VE), and R141.

This sequence belongs to the methyltransferase superfamily. RNA methyltransferase RsmG family.

It localises to the cytoplasm. The catalysed reaction is guanosine(527) in 16S rRNA + S-adenosyl-L-methionine = N(7)-methylguanosine(527) in 16S rRNA + S-adenosyl-L-homocysteine. Functionally, specifically methylates the N7 position of guanine in position 527 of 16S rRNA. The polypeptide is Ribosomal RNA small subunit methyltransferase G (Colwellia psychrerythraea (strain 34H / ATCC BAA-681) (Vibrio psychroerythus)).